Reading from the N-terminus, the 147-residue chain is UPF0735 ACT domain-containing protein BH1214 (147 aa).

The 76-residue stretch at 70 to 145 folds into the ACT domain; that stretch reads TLSINLEDRS…AVEKVELVGS (76 aa).

The protein belongs to the UPF0735 family.

The protein is UPF0735 ACT domain-containing protein BH1214 of Halalkalibacterium halodurans (strain ATCC BAA-125 / DSM 18197 / FERM 7344 / JCM 9153 / C-125) (Bacillus halodurans).